We begin with the raw amino-acid sequence, 210 residues long: Tetraspanin-31 (210 aa).

Residues 1-12 are Cytoplasmic-facing; the sequence is MVCGGFACSRNA. A helical membrane pass occupies residues 13–33; the sequence is LCALNVVYMLVGFLLIGVAAW. The Extracellular portion of the chain corresponds to 34–44; that stretch reads GKGLGVVSSIH. A helical membrane pass occupies residues 45 to 65; sequence IIGGVIAVGVFLLLIAVAGLV. Residues 66-72 lie on the Cytoplasmic side of the membrane; that stretch reads GAANHHQ. The helical transmembrane segment at 73 to 93 threads the bilayer; it reads VLLFFYMIILGLVFIFQFGIS. The Extracellular segment spans residues 94 to 173; it reads CSCLAINRNT…FLKHSDKALK (80 aa). 3 N-linked (GlcNAc...) asparagine glycosylation sites follow: N109, N117, and N134. The chain crosses the membrane as a helical span at residues 174–194; sequence ILGGVGLFFSFTEILGVWLAM. Residues 195–210 lie on the Cytoplasmic side of the membrane; it reads RFRNQKDPRANPSAFL.

This sequence belongs to the tetraspanin (TM4SF) family.

The protein localises to the membrane. The protein is Tetraspanin-31 (Tspan31) of Mus musculus (Mouse).